A 177-amino-acid polypeptide reads, in one-letter code: Isopentenyl-diphosphate Delta-isomerase 1 (177 aa).

Positions 24 and 30 each coordinate Mn(2+). The Nudix hydrolase domain maps to 28–160 (SLHRAISIFI…PHAYSFWLEA (133 aa)). C65 is a catalytic residue. Residue C65 participates in Mg(2+) binding. H67 contacts Mn(2+). E85 serves as a coordination point for Mg(2+). Mn(2+)-binding residues include E110 and E112. E112 is an active-site residue.

The protein belongs to the IPP isomerase type 1 family. The cofactor is Mg(2+). Mn(2+) is required as a cofactor.

It localises to the cytoplasm. It carries out the reaction isopentenyl diphosphate = dimethylallyl diphosphate. It functions in the pathway isoprenoid biosynthesis; dimethylallyl diphosphate biosynthesis; dimethylallyl diphosphate from isopentenyl diphosphate: step 1/1. In terms of biological role, catalyzes the 1,3-allylic rearrangement of the homoallylic substrate isopentenyl (IPP) to its highly electrophilic allylic isomer, dimethylallyl diphosphate (DMAPP). The protein is Isopentenyl-diphosphate Delta-isomerase 1 of Aromatoleum aromaticum (strain DSM 19018 / LMG 30748 / EbN1) (Azoarcus sp. (strain EbN1)).